Consider the following 335-residue polypeptide: DNA polymerase beta (335 aa).

Lysine 41 participates in a covalent cross-link: Glycyl lysine isopeptide (Lys-Gly) (interchain with G-Cter in ubiquitin). Residue lysine 60 participates in K(+) binding. Residue lysine 60 participates in Na(+) binding. Lysine 61 participates in a covalent cross-link: Glycyl lysine isopeptide (Lys-Gly) (interchain with G-Cter in ubiquitin). K(+) contacts are provided by leucine 62 and valine 65. Leucine 62 and valine 65 together coordinate Na(+). The active-site Nucleophile; Schiff-base intermediate with DNA; for 5'-dRP lyase activity is lysine 72. The residue at position 72 (lysine 72) is an N6-acetyllysine. A Glycyl lysine isopeptide (Lys-Gly) (interchain with G-Cter in ubiquitin) cross-link involves residue lysine 81. An Omega-N-methylarginine; by PRMT6 modification is found at arginine 83. Residues threonine 101, valine 103, and isoleucine 106 each coordinate K(+). Residues threonine 101, valine 103, and isoleucine 106 each contribute to the Na(+) site. Arginine 149 serves as a coordination point for dATP. Arginine 149 provides a ligand contact to dCTP. Arginine 149 contributes to the dGTP binding site. A dTTP-binding site is contributed by arginine 149. Arginine 152 carries the omega-N-methylarginine; by PRMT6 modification. DATP-binding residues include serine 180, arginine 183, glycine 189, and aspartate 190. The dCTP site is built by serine 180, arginine 183, glycine 189, and aspartate 190. DGTP contacts are provided by serine 180, arginine 183, glycine 189, aspartate 190, and aspartate 192. Positions 180, 183, 189, and 190 each coordinate dTTP. The DNA-binding stretch occupies residues 183–192 (RGAESSGDMD). The Mg(2+) site is built by aspartate 190, aspartate 192, and aspartate 256.

The protein belongs to the DNA polymerase type-X family. As to quaternary structure, monomer. Binds single-stranded DNA (ssDNA). Interacts with APEX1, LIG1, LIG3, FEN1, PCNA and XRCC1. Interacts with HUWE1/ARF-BP1, STUB1/CHIP and USP47. Interacts with FAM168A. It depends on Mg(2+) as a cofactor. In terms of processing, methylation by PRMT6 stimulates the polymerase activity by enhancing DNA binding and processivity. Post-translationally, ubiquitinated at Lys-41, Lys-61 and Lys-81: monoubiquitinated by HUWE1/ARF-BP1. Monoubiquitinated protein is then the target of STUB1/CHIP, which catalyzes polyubiquitination from monoubiquitin, leading to degradation by the proteasome. USP47 mediates the deubiquitination of monoubiquitinated protein, preventing polyubiquitination by STUB1/CHIP and its subsequent degradation.

Its subcellular location is the nucleus. The protein localises to the cytoplasm. It carries out the reaction DNA(n) + a 2'-deoxyribonucleoside 5'-triphosphate = DNA(n+1) + diphosphate. It catalyses the reaction a 5'-end 2'-deoxyribose-2'-deoxyribonucleotide-DNA = (2E,4S)-4-hydroxypenten-2-al-5-phosphate + a 5'-end 5'-phospho-2'-deoxyribonucleoside-DNA + H(+). The enzyme catalyses 2'-deoxyribonucleotide-(2'-deoxyribose 5'-phosphate)-2'-deoxyribonucleotide-DNA = a 3'-end 2'-deoxyribonucleotide-(2,3-dehydro-2,3-deoxyribose 5'-phosphate)-DNA + a 5'-end 5'-phospho-2'-deoxyribonucleoside-DNA + H(+). Functionally, repair polymerase that plays a key role in base-excision repair. During this process, the damaged base is excised by specific DNA glycosylases, the DNA backbone is nicked at the abasic site by an apurinic/apyrimidic (AP) endonuclease, and POLB removes 5'-deoxyribose-phosphate from the preincised AP site acting as a 5'-deoxyribose-phosphate lyase (5'-dRP lyase); through its DNA polymerase activity, it adds one nucleotide to the 3' end of the arising single-nucleotide gap. Conducts 'gap-filling' DNA synthesis in a stepwise distributive fashion rather than in a processive fashion as for other DNA polymerases. It is also able to cleave sugar-phosphate bonds 3' to an intact AP site, acting as an AP lyase. The chain is DNA polymerase beta (POLB) from Homo sapiens (Human).